We begin with the raw amino-acid sequence, 248 residues long: 3-deoxy-manno-octulosonate cytidylyltransferase (248 aa).

It belongs to the KdsB family.

It is found in the cytoplasm. The catalysed reaction is 3-deoxy-alpha-D-manno-oct-2-ulosonate + CTP = CMP-3-deoxy-beta-D-manno-octulosonate + diphosphate. The protein operates within nucleotide-sugar biosynthesis; CMP-3-deoxy-D-manno-octulosonate biosynthesis; CMP-3-deoxy-D-manno-octulosonate from 3-deoxy-D-manno-octulosonate and CTP: step 1/1. It participates in bacterial outer membrane biogenesis; lipopolysaccharide biosynthesis. Its function is as follows. Activates KDO (a required 8-carbon sugar) for incorporation into bacterial lipopolysaccharide in Gram-negative bacteria. The sequence is that of 3-deoxy-manno-octulosonate cytidylyltransferase from Syntrophus aciditrophicus (strain SB).